The chain runs to 1387 residues: Magnesium-chelatase subunit ChlH, chloroplastic (1387 aa).

Residues Met-1–Arg-50 constitute a chloroplast transit peptide.

It belongs to the Mg-chelatase subunit H family. In terms of assembly, the magnesium chelatase complex is a heterotrimer consisting of subunits CHLI, CHLD and CHLH.

Its subcellular location is the plastid. The protein resides in the chloroplast stroma. The protein localises to the chloroplast membrane. It catalyses the reaction protoporphyrin IX + Mg(2+) + ATP + H2O = Mg-protoporphyrin IX + ADP + phosphate + 3 H(+). It functions in the pathway porphyrin-containing compound metabolism; chlorophyll biosynthesis. Involved in chlorophyll biosynthesis. Catalyzes the insertion of magnesium ion into protoporphyrin IX to yield Mg-protoporphyrin IX. The reaction takes place in two steps, with an ATP-dependent activation followed by an ATP-dependent chelation step. May be involved in the plastid-to-nucleus retrograde signaling. The sequence is that of Magnesium-chelatase subunit ChlH, chloroplastic (CHLH) from Oryza sativa subsp. indica (Rice).